The following is a 1856-amino-acid chain: Golgi-specific brefeldin A-resistance guanine nucleotide exchange factor 1 (1856 aa).

A DCB (dimerization and cyclophiln-binding); DCB:DCB domain and DCB:HUS domain interaction region spans residues Met1 to Met211. An interaction with RAB1B region spans residues Met1 to Pro378. Disordered regions lie at residues Lys215–Thr256 and Asp291–Val370. Residues Trp227–Thr241 are compositionally biased toward basic residues. Positions Arg316 to Ile328 are enriched in polar residues. 2 positions are modified to phosphoserine: Ser349 and Ser352. Thr505 is subject to Phosphothreonine. The interval Arg528–Asn548 is HUS (homology upstream of Sec7); DCB:HUS domain interaction. The segment at Gln601–Ala626 is disordered. The segment covering Asp615–Arg625 has biased composition (polar residues). Residues Glu690–Glu880 form the SEC7 domain. The interval Met884–Val1370 is phosphatidylinositol-phosphate binding; required for translocation to the leading edge and for ARF1 activation upon GPCR signaling. Residues Thr1284 to Ala1294 show a composition bias toward low complexity. The tract at residues Thr1284–Ser1333 is disordered. The segment covering Gln1295–Val1308 has biased composition (polar residues). Ser1296 carries the post-translational modification Phosphoserine. Tyr1314 bears the Phosphotyrosine mark. 3 positions are modified to phosphoserine: Ser1316, Ser1318, and Ser1333. Thr1335 is subject to Phosphothreonine; by AMPK. Disordered stretches follow at residues Cys1430–Pro1484, Thr1739–Ile1806, and Pro1837–Asn1856. A compositionally biased stretch (basic and acidic residues) spans Ser1432–Gly1446. 2 positions are modified to phosphoserine: Ser1475 and Ser1781. Residues Ser1775–Ser1793 show a composition bias toward low complexity.

As to quaternary structure, can form homodimers and probably homotetramers. Interacts with COPG1; the interaction is independent on ARF1 activation. Interacts with ARF1, ARF3, ARF4 and ARF5. Interacts with RAB1B (GTP-bound form); required for GBF1 membrane association. Interacts with GGA1, GGA2 and GGA3. Interacts with USO1. Interacts (via SEC7 domain) with PNPLA2 (via C-terminus); the interaction is direct. Can form homodimers and probably homotetramers. Interacts with COPG1; the interaction is independent on ARF1 activation. Interacts with ARF1, ARF3, ARF4 and ARF5. Interacts with RAB1B (GTP-bound form); required for GBF1 membrane association. Interacts with GGA1, GGA2 and GGA3. Interacts with USO1. Interacts (via SEC7 domain) with PNPLA2 (via C-terminus); the interaction is direct. Interacts with ARMH3.

It localises to the golgi apparatus. It is found in the cis-Golgi network. Its subcellular location is the endoplasmic reticulum-Golgi intermediate compartment. The protein resides in the trans-Golgi network. The protein localises to the cytoplasm. It localises to the lipid droplet. It is found in the membrane. With respect to regulation, inhibited by brefeldin A (BFA). Inhibited by golgicide A (GCA). In terms of biological role, guanine-nucleotide exchange factor (GEF) for members of the Arf family of small GTPases involved in trafficking in the early secretory pathway; its GEF activity initiates the coating of nascent vesicles via the localized generation of activated ARFs through replacement of GDP with GTP. Recruitment to cis-Golgi membranes requires membrane association of Arf-GDP and can be regulated by ARF1, ARF3, ARF4 and ARF5. Involved in the recruitment of the COPI coat complex to cellular membranes such as the endoplasmic reticulum exit sites (ERES), and the endoplasmic reticulum-Golgi intermediate (ERGIC) and cis-Golgi compartments implicating ARF1 activation. Involved in COPI vesicle-dependent retrograde transport from the ERGIC and cis-Golgi compartments to the endoplasmic reticulum (ER). Involved in the trans-Golgi network recruitment of GGA1, GGA2, GGA3, BIG1, BIG2, and the AP-1 adaptor protein complex related to chlathrin-dependent transport; the function requires its GEF activity (probably at least in part on ARF4 and ARF5). Has GEF activity towards ARF1. Has in vitro GEF activity towards ARF5. Involved in the processing of PSAP. Required for the assembly of the Golgi apparatus. The AMPK-phosphorylated form is involved in Golgi disassembly during mitotis and under stress conditions. May be involved in the COPI vesicle-dependent recruitment of PNPLA2 to lipid droplets. In neutrophils, involved in G protein-coupled receptor (GPCR)-mediated chemotaxis und superoxide production. Proposed to be recruited by phosphatidylinositol-phosphates generated upon GPCR stimulation to the leading edge where it recruits and activates ARF1, and is involved in recruitment of GIT2 and the NADPH oxidase complex. Plays a role in maintaining mitochondrial morphology. This is Golgi-specific brefeldin A-resistance guanine nucleotide exchange factor 1 (GBF1) from Cricetulus griseus (Chinese hamster).